A 580-amino-acid polypeptide reads, in one-letter code: Acyl-coenzyme A synthetase ACSM4, mitochondrial (580 aa).

A mitochondrion-targeting transit peptide spans 1–22; it reads MKVLLRCQRLRFIWLAKPAGRH. ATP is bound by residues 229 to 237, 368 to 373, Asp455, Arg470, and Lys566; these read TSGTTGSPK and EGYGQT.

The protein belongs to the ATP-dependent AMP-binding enzyme family. The cofactor is Mg(2+). Requires Mn(2+) as cofactor. In terms of tissue distribution, detected in adult olfactory epithelium.

The protein resides in the mitochondrion. It carries out the reaction a medium-chain fatty acid + ATP + CoA = a medium-chain fatty acyl-CoA + AMP + diphosphate. It catalyses the reaction hexanoate + ATP + CoA = hexanoyl-CoA + AMP + diphosphate. The catalysed reaction is octanoate + ATP + CoA = octanoyl-CoA + AMP + diphosphate. The enzyme catalyses decanoate + ATP + CoA = decanoyl-CoA + AMP + diphosphate. It carries out the reaction dodecanoate + ATP + CoA = dodecanoyl-CoA + AMP + diphosphate. Catalyzes the activation of fatty acids by CoA to produce an acyl-CoA, the first step in fatty acid metabolism. Capable of activating medium-chain fatty acids with a preference for C6-12 fatty acids. This chain is Acyl-coenzyme A synthetase ACSM4, mitochondrial (Acsm4), found in Rattus norvegicus (Rat).